The primary structure comprises 31 residues: MSILINYFLLVGFCFALASGLFLGLKSIKLI.

The helical transmembrane segment at 3–23 (ILINYFLLVGFCFALASGLFL) threads the bilayer.

It belongs to the PetL family. In terms of assembly, the 4 large subunits of the cytochrome b6-f complex are cytochrome b6, subunit IV (17 kDa polypeptide, PetD), cytochrome f and the Rieske protein, while the 4 small subunits are PetG, PetL, PetM and PetN. The complex functions as a dimer.

It is found in the plastid. The protein resides in the chloroplast thylakoid membrane. In terms of biological role, component of the cytochrome b6-f complex, which mediates electron transfer between photosystem II (PSII) and photosystem I (PSI), cyclic electron flow around PSI, and state transitions. PetL is important for photoautotrophic growth as well as for electron transfer efficiency and stability of the cytochrome b6-f complex. The polypeptide is Cytochrome b6-f complex subunit 6 (Thalassiosira pseudonana (Marine diatom)).